The sequence spans 2179 residues: Genome polyprotein (2179 aa).

Residues 763–765 (RGD) carry the Cell attachment site motif. An LRAT domain is found at 786 to 881 (LAYLDRGFYK…IFGSHSLSQH (96 aa)). The For protein 2A H-NC role is filled by histidine 796. Residue cysteine 865 is the For protein 2A H-NC; Acyl-thioester intermediate of the active site. The SF3 helicase domain maps to 1156–1317 (FQELARIPNR…KHYSKSGKLN (162 aa)). 1184 to 1191 (GEPGQGKS) serves as a coordination point for ATP. Residue tyrosine 1493 is modified to O-(5'-phospho-RNA)-tyrosine. The region spanning 1517–1707 (APYDGQLEHI…IPFNFLKNDM (191 aa)) is the Peptidase C3 domain. Catalysis depends on for protease 3C activity residues histidine 1557, aspartate 1595, and cysteine 1669. Cysteine 1896 functions as the Acyl-thioester intermediate in the catalytic mechanism. The RdRp catalytic domain maps to 1944 to 2058 (DYNYEMDYSQ…SLDKEIEPER (115 aa)). 2 residues coordinate Mg(2+): aspartate 1950 and aspartate 2044.

The protein belongs to the picornaviruses polyprotein family. As to quaternary structure, interacts with capsid protein VP1 and capsid protein VP3 to form heterotrimeric protomers. Five protomers subsequently associate to form pentamers which serve as building blocks for the capsid. In terms of assembly, interacts with capsid protein VP0, and capsid protein VP3 to form heterotrimeric protomers. Five protomers subsequently associate to form pentamers which serve as building blocks for the capsid. Interacts with capsid protein VP0 and capsid protein VP1 to form heterotrimeric protomers. Five protomers subsequently associate to form pentamers which serve as building blocks for the capsid. As to quaternary structure, homohexamer; forms a hexameric ring structure with 6-fold symmetry characteristic of AAA+ ATPases. In terms of assembly, homodimer. Interacts with host ACBD3. Interacts with RNA-directed RNA polymerase. As to quaternary structure, interacts with Viral protein genome-linked. Mg(2+) is required as a cofactor. Post-translationally, VPg is uridylylated by the polymerase and is covalently linked to the 5'-end of genomic RNA. This uridylylated form acts as a nucleotide-peptide primer for the polymerase. Specific enzymatic cleavages yield mature proteins. All cleavages are catalyzed by P3C.

It is found in the virion. The protein resides in the host cytoplasm. It localises to the host nucleus. Its subcellular location is the host nucleolus. The protein localises to the host cytoplasmic vesicle membrane. It catalyses the reaction RNA(n) + a ribonucleoside 5'-triphosphate = RNA(n+1) + diphosphate. The catalysed reaction is a ribonucleoside 5'-triphosphate + H2O = a ribonucleoside 5'-diphosphate + phosphate + H(+). The enzyme catalyses Selective cleavage of Gln-|-Gly bond in the poliovirus polyprotein. In other picornavirus reactions Glu may be substituted for Gln, and Ser or Thr for Gly.. Forms an icosahedral capsid of pseudo T=3 symmetry together with capsid proteins VP1 and VP3. The capsid is 300 Angstroms in diameter, composed of 60 copies of each capsid protein and enclosing the viral positive strand RNA genome. Capsid proteins interact with host alpha-V/beta-3 integrin heterodimer to provide virion attachment target cell. This attachment induces virion internalization predominantly through clathrin-mediated endocytosis. Binds packaging signals present in the viral RNA. Functionally, forms an icosahedral capsid of pseudo T=3 symmetry together with capsid proteins VP0 and VP1. The capsid is 300 Angstroms in diameter, composed of 60 copies of each capsid protein and enclosing the viral positive strand RNA genome. Capsid proteins interact with host alpha-V/beta-3 integrin heterodimer to provide virion attachment target cell. This attachment induces virion internalization predominantly through clathrin-mediated endocytosis. Binds packaging signals present in the viral RNA. In terms of biological role, forms an icosahedral capsid of pseudo T=3 symmetry together with capsid proteins VP0 and VP3. The capsid is 300 Angstroms in diameter, composed of 60 copies of each capsid protein and enclosing the viral positive strand RNA genome. Capsid proteins interact with host alpha-V/beta-3 integrin heterodimer to provide virion attachment target cell. This attachment induces virion internalization predominantly through clathrin-mediated endocytosis. Binds packaging signals present in the viral RNA. Its function is as follows. Is not a protease. Plays an essential role in the virus replication cycle by acting as a viroporin. Creates a pore in the host endoplasmic reticulum and as a consequence releases Ca2+ in the cytoplasm of infected cell. In turn, high levels of cytoplasmic calcium may trigger membrane trafficking and transport of viral ER-associated proteins to viroplasms, sites of viral genome replication. Functionally, induces and associates with structural rearrangements of intracellular membranes. Displays RNA-binding, nucleotide binding and NTPase activities. May play a role in virion morphogenesis and viral RNA encapsidation by interacting with the capsid protein VP3. In terms of biological role, localizes the viral replication complex to the surface of membranous vesicles. It inhibits host cell endoplasmic reticulum-to-Golgi apparatus transport and causes the disassembly of the Golgi complex, possibly through GBF1 interaction. This would result in depletion of MHC, trail receptors and IFN receptors at the host cell surface. Plays an essential role in viral RNA replication by recruiting ACBD3 and PI4KB at the viral replication sites, thereby allowing the formation of the rearranged membranous structures where viral replication takes place. Its function is as follows. Acts as a primer for viral RNA replication and remains covalently bound to viral genomic RNA. VPg is uridylylated prior to priming replication into VPg-pUpU. The VPg-pUpU is then used as primer on the genomic RNA poly(A) by the RNA-dependent RNA polymerase to replicate the viral genome. Following genome release from the infecting virion in the cytoplasm, the VPg-RNA linkage is probably removed by host TDP2. During the late stage of the replication cycle, host TDP2 is excluded from sites of viral RNA synthesis and encapsidation, allowing for the generation of progeny virions. Cysteine protease that generates mature viral proteins from the precursor polyprotein. In addition to its proteolytic activity, it binds to viral RNA, and thus influences viral genome replication. RNA and substrate bind cooperatively to the protease. Functionally, replicates the viral genomic RNA on the surface of intracellular membranes. Covalently attaches UMP to a tyrosine of VPg, which is used to prime RNA synthesis. The positive stranded RNA genome is first replicated at virus induced membranous vesicles, creating a dsRNA genomic replication form. This dsRNA is then used as template to synthesize positive stranded RNA genomes. ss(+)RNA genomes are either translated, replicated or encapsidated. The chain is Genome polyprotein from Human parechovirus 2 (strain Williamson) (HPeV-2).